Here is a 367-residue protein sequence, read N- to C-terminus: Protein SGT1 homolog (367 aa).

TPR repeat units lie at residues 6–39 (ASDL…SPAT), 40–73 (AELY…DPSM), and 75–107 (KAYL…ASGD). Positions 165 to 254 (KPKYRHDFYN…AEQITWTSLD (90 aa)) constitute a CS domain. 2 disordered regions span residues 261 to 289 (AVPQ…DWDK) and 347 to 367 (VGSK…KWEY). Positions 277-367 (SYPSSKSKKD…DGMELKKWEY (91 aa)) constitute an SGS domain.

The protein belongs to the SGT1 family. In terms of assembly, interacts (via CS domain) with RAR1 (via CHORD 2 domain). Interacts with RAD6. As to expression, expressed in roots, root tips, shoot apical meristem (SAM), young leaves, flag leaves and ears.

It is found in the cytoplasm. Its subcellular location is the nucleus. Involved in basal disease resistance to bacterial blight (X.oryzae). May act as positive regulator of basal defense. Probably required for SCF-mediated ubiquitination, by coupling HSP90 to SCF complex for ubiquitination of HSP90 client proteins. This is Protein SGT1 homolog from Oryza sativa subsp. japonica (Rice).